The primary structure comprises 256 residues: Pimeloyl-[acyl-carrier protein] methyl ester esterase (256 aa).

The region spanning 15-242 is the AB hydrolase-1 domain; sequence HLVLLHGWGL…AAHAPFISHP (228 aa). Residues tryptophan 22, 82-83, and 143-147 each bind substrate; these read SL and FLALQ. The active-site Nucleophile is serine 82. Catalysis depends on residues aspartate 207 and histidine 235. A substrate-binding site is contributed by histidine 235.

Belongs to the AB hydrolase superfamily. Carboxylesterase BioH family. Monomer.

It localises to the cytoplasm. It carries out the reaction 6-carboxyhexanoyl-[ACP] methyl ester + H2O = 6-carboxyhexanoyl-[ACP] + methanol + H(+). It participates in cofactor biosynthesis; biotin biosynthesis. Its function is as follows. The physiological role of BioH is to remove the methyl group introduced by BioC when the pimeloyl moiety is complete. It allows to synthesize pimeloyl-ACP via the fatty acid synthetic pathway through the hydrolysis of the ester bonds of pimeloyl-ACP esters. This Salmonella dublin (strain CT_02021853) protein is Pimeloyl-[acyl-carrier protein] methyl ester esterase.